A 294-amino-acid polypeptide reads, in one-letter code: 26S proteasome regulatory subunit RPN11 (294 aa).

The MPN domain occupies valine 21–glutamine 156. Residues histidine 103, histidine 105, and aspartate 116 each coordinate Zn(2+). A JAMM motif motif is present at residues histidine 103 to aspartate 116.

Belongs to the peptidase M67A family. The 26S proteasome consists of a 20S proteasome core and two 19S regulatory subunits. The 20S proteasome core is composed of 28 subunits that are arranged in four stacked rings, resulting in a barrel-shaped structure. The two end rings are each formed by seven alpha subunits, and the two central rings are each formed by seven beta subunits. The catalytic chamber with the active sites is on the inside of the barrel.

The protein resides in the cytoplasm. The protein localises to the nucleus. Its function is as follows. Acts as a regulatory subunit of the 26S proteasome which degrades poly-ubiquitinated proteins in the cytoplasm and in the nucleus. It is essential for the regulated turnover of proteins and for the removal of misfolded proteins. The proteasome is a multicatalytic proteinase complex that is characterized by its ability to cleave peptides with Arg, Phe, Tyr, Leu, and Glu adjacent to the leaving group at neutral or slightly basic pH. This is 26S proteasome regulatory subunit RPN11 (RPN11) from Encephalitozoon cuniculi (strain GB-M1) (Microsporidian parasite).